Consider the following 274-residue polypeptide: Formamidopyrimidine-DNA glycosylase (274 aa).

Pro2 acts as the Schiff-base intermediate with DNA in catalysis. Catalysis depends on Glu3, which acts as the Proton donor. The active-site Proton donor; for beta-elimination activity is the Lys58. Residues His91 and Arg110 each contribute to the DNA site. Residues 238 to 272 form an FPG-type zinc finger; the sequence is QVYDKTGQECVRCGTIIEKIQLGGRGTHFCPNCQR. Arg262 functions as the Proton donor; for delta-elimination activity in the catalytic mechanism.

Belongs to the FPG family. As to quaternary structure, monomer. It depends on Zn(2+) as a cofactor.

It carries out the reaction Hydrolysis of DNA containing ring-opened 7-methylguanine residues, releasing 2,6-diamino-4-hydroxy-5-(N-methyl)formamidopyrimidine.. The enzyme catalyses 2'-deoxyribonucleotide-(2'-deoxyribose 5'-phosphate)-2'-deoxyribonucleotide-DNA = a 3'-end 2'-deoxyribonucleotide-(2,3-dehydro-2,3-deoxyribose 5'-phosphate)-DNA + a 5'-end 5'-phospho-2'-deoxyribonucleoside-DNA + H(+). Its function is as follows. Involved in base excision repair of DNA damaged by oxidation or by mutagenic agents. Acts as a DNA glycosylase that recognizes and removes damaged bases. Has a preference for oxidized purines, such as 7,8-dihydro-8-oxoguanine (8-oxoG). Has AP (apurinic/apyrimidinic) lyase activity and introduces nicks in the DNA strand. Cleaves the DNA backbone by beta-delta elimination to generate a single-strand break at the site of the removed base with both 3'- and 5'-phosphates. This Streptococcus pneumoniae serotype 4 (strain ATCC BAA-334 / TIGR4) protein is Formamidopyrimidine-DNA glycosylase.